Consider the following 346-residue polypeptide: Homeobox protein ceh-22 (346 aa).

Disordered stretches follow at residues 1–68 (MFNV…QSAL) and 135–190 (LPDQ…RKKR). A compositionally biased stretch (low complexity) spans 9–24 (AATPSIASVSSVASPS). Residues 25–44 (EQHGLSTSVGVGVNDTTSRT) are compositionally biased toward polar residues. Residues 49–67 (AASSASSASAAPQQQSQSA) are compositionally biased toward low complexity. Positions 147–156 (LDNSNTSNGN) are enriched in polar residues. Positions 166–182 (EDEDEILEDEENDEEDD) are enriched in acidic residues. The homeobox DNA-binding region spans 189 to 248 (KRKRRVLFTKAQTYELERRFRSQKYLSAPEREALAMQIRLTPTQVKIWFQNHRYKTKKSH).

It belongs to the NK-2 homeobox family.

The protein resides in the nucleus. In terms of biological role, involved in combinatorial activation of gene expression in pharyngeal muscle. Specifically binds a site necessary for activity of the B subelement of myo-2 enhancer. Functionally, regulates distal tip cell fate. The protein is Homeobox protein ceh-22 (ceh-22) of Caenorhabditis elegans.